We begin with the raw amino-acid sequence, 363 residues long: MAP kinase kinase skh1/pek1 (363 aa).

In terms of domain architecture, Protein kinase spans 79–343 (ILYMNSLGEG…PQKMLTHPWV (265 aa)). ATP is bound by residues 85–93 (LGEGVSGSV) and K108. The Proton acceptor role is filled by D206. S234 carries the phosphoserine modification. Residue T238 is modified to Phosphothreonine.

It belongs to the protein kinase superfamily. STE Ser/Thr protein kinase family. MAP kinase kinase subfamily.

It carries out the reaction L-seryl-[protein] + ATP = O-phospho-L-seryl-[protein] + ADP + H(+). It catalyses the reaction L-threonyl-[protein] + ATP = O-phospho-L-threonyl-[protein] + ADP + H(+). The enzyme catalyses L-tyrosyl-[protein] + ATP = O-phospho-L-tyrosyl-[protein] + ADP + H(+). Activated by mkh1. Involved in the mkh1 signal transduction pathway that plays a role in cell wall integrity. Activates spm1/pmk1 via phosphorylation. The polypeptide is MAP kinase kinase skh1/pek1 (skh1) (Schizosaccharomyces pombe (strain 972 / ATCC 24843) (Fission yeast)).